Consider the following 561-residue polypeptide: Putative transport protein YbjL (561 aa).

A run of 5 helical transmembrane segments spans residues 8 to 28 (LLNG…LCLG), 32 to 52 (LGSI…LLGQ), 66 to 86 (FMLF…SIFF), 94 to 114 (MLAL…GKLF), and 158 to 178 (NLSL…IVGA). 2 RCK C-terminal domains span residues 200 to 288 (RGLD…SFRN) and 292 to 373 (VFDR…RIGF). Helical transmembrane passes span 383–403 (LLAF…TFQF), 406–426 (FSFG…LGFM), 451–471 (VFMA…LGAI), 475–495 (MLIA…LFGA), and 540–560 (AIAN…WPGL).

Belongs to the AAE transporter (TC 2.A.81) family. YbjL subfamily.

The protein localises to the cell membrane. This is Putative transport protein YbjL from Shigella flexneri.